A 374-amino-acid polypeptide reads, in one-letter code: Low-specificity L-threonine aldolase (374 aa).

Residue K213 is modified to N6-(pyridoxal phosphate)lysine. Positions H354–K374 are disordered.

It belongs to the threonine aldolase family. Homotetramer. It depends on pyridoxal 5'-phosphate as a cofactor.

The enzyme catalyses L-threonine = acetaldehyde + glycine. The catalysed reaction is L-allo-threonine = acetaldehyde + glycine. The protein operates within amino-acid degradation; L-threonine degradation via aldolase pathway; acetaldehyde and glycine from L-threonine: step 1/1. The sequence is that of Low-specificity L-threonine aldolase (GLY1) from Candida albicans (Yeast).